A 457-amino-acid chain; its full sequence is Chromosomal replication initiator protein DnaA (457 aa).

Residues 1–75 (MDAQLNNLWE…ALKIVTSRKF (75 aa)) form a domain I, interacts with DnaA modulators region. Residues 75–118 (FKIEFYLESDLEEEKENEEKQKEEKKDNTNDVDGSIVVSDEMSA) form a domain II region. Residues 87–108 (EEKENEEKQKEEKKDNTNDVDG) form a disordered region. Positions 91–103 (NEEKQKEEKKDNT) are enriched in basic and acidic residues. The interval 119-335 (TLNPKYTFQS…GALIRIIAYS (217 aa)) is domain III, AAA+ region. Residues Gly163, Gly165, Lys166, and Thr167 each coordinate ATP. The segment at 336-457 (SLTNRDVSVD…NDITKKLTQK (122 aa)) is domain IV, binds dsDNA.

Belongs to the DnaA family. Oligomerizes as a right-handed, spiral filament on DNA at oriC.

Its subcellular location is the cytoplasm. In terms of biological role, plays an essential role in the initiation and regulation of chromosomal replication. ATP-DnaA binds to the origin of replication (oriC) to initiate formation of the DNA replication initiation complex once per cell cycle. Binds the DnaA box (a 9 base pair repeat at the origin) and separates the double-stranded (ds)DNA. Forms a right-handed helical filament on oriC DNA; dsDNA binds to the exterior of the filament while single-stranded (ss)DNA is stabiized in the filament's interior. The ATP-DnaA-oriC complex binds and stabilizes one strand of the AT-rich DNA unwinding element (DUE), permitting loading of DNA polymerase. After initiation quickly degrades to an ADP-DnaA complex that is not apt for DNA replication. Binds acidic phospholipids. In Clostridium perfringens (strain SM101 / Type A), this protein is Chromosomal replication initiator protein DnaA.